The following is a 296-amino-acid chain: MSEKKIQLVIVTGMSGAGKTVAIQSFEDLGYFTIDNMPPTLVPKFLQLVEGTTDNDKLALVVDMRSRSFFLQIQNVLDELEQNENIDFKILFLDAADKELVARYKETRRSHPLAADGRILDGIKLERELLAPLKNLSQNVVDTTDLTPRELRKTISEQFSNQADMHSFRIEVMSFGFKYGLPLDADLVFDVRFLPNPYYKPELRNQTGLDKDVFDYVMNHAESEEFYKNLLGLIEPILPGYQKEGKSILTIAVGCTGGQHRSVAFAQRLADDLAKNWPVNSSHRDKNRRKETVNRS.

13 to 20 (GMSGAGKT) provides a ligand contact to ATP. 63–66 (DMRS) lines the GTP pocket. Residues 277 to 296 (WPVNSSHRDKNRRKETVNRS) form a disordered region. Basic and acidic residues predominate over residues 282 to 296 (SHRDKNRRKETVNRS).

This sequence belongs to the RapZ-like family.

Functionally, displays ATPase and GTPase activities. This chain is Nucleotide-binding protein SSA_0810, found in Streptococcus sanguinis (strain SK36).